Consider the following 305-residue polypeptide: Ribonuclease BN (305 aa).

The Zn(2+) site is built by His-64, His-66, Asp-68, His-69, His-141, Asp-212, and His-270. Asp-68 functions as the Proton acceptor in the catalytic mechanism.

It belongs to the RNase Z family. RNase BN subfamily. As to quaternary structure, homodimer. Requires Zn(2+) as cofactor.

Zinc phosphodiesterase, which has both exoribonuclease and endoribonuclease activities. This chain is Ribonuclease BN, found in Escherichia coli O157:H7.